We begin with the raw amino-acid sequence, 677 residues long: Threonine--tRNA ligase (677 aa).

Residues 1 to 59 (MAQATISITVNGEAKEVEATTTGVELFAEDKNIIAVKINGENRDLYTPLNDGDTVDPIA) enclose the TGS domain. Residues 255–561 (DHRKLGAEMD…LLEHYAGAFP (307 aa)) form a catalytic region. Positions 360, 411, and 538 each coordinate Zn(2+).

Belongs to the class-II aminoacyl-tRNA synthetase family. Homodimer. Requires Zn(2+) as cofactor.

The protein resides in the cytoplasm. It catalyses the reaction tRNA(Thr) + L-threonine + ATP = L-threonyl-tRNA(Thr) + AMP + diphosphate + H(+). Its function is as follows. Catalyzes the attachment of threonine to tRNA(Thr) in a two-step reaction: L-threonine is first activated by ATP to form Thr-AMP and then transferred to the acceptor end of tRNA(Thr). Also edits incorrectly charged L-seryl-tRNA(Thr). This Bifidobacterium longum (strain DJO10A) protein is Threonine--tRNA ligase.